The primary structure comprises 67 residues: Large ribosomal subunit protein bL35 (67 aa).

The protein belongs to the bacterial ribosomal protein bL35 family.

The sequence is that of Large ribosomal subunit protein bL35 from Brachyspira hyodysenteriae (strain ATCC 49526 / WA1).